Consider the following 260-residue polypeptide: MALRRPMVAGNWKMNGNSALAEELFKKFATKLQNDSAEVVLCPPSIYLESVRQLLEANKQTLDGALVRMGAQNLSQHDFGAYTGEISGQMLKDSGCRYVIIGHSERRRMYGETSNIVAEKFAAAQKYGLTPILCVGESGPAREARRTFEVIAEELDIVIEKNGTMAFDNAIIAYEPLWAVGTGKSATPEQAQEVHAFIRSRLSEVSPFIGENIRILYGGSVTPSNAADIFAQPDVDGGLIGGASLNSSEFLSLCTIAMSA.

Residue asparagine 11–lysine 13 coordinates substrate. The active-site Electrophile is the histidine 103. Glutamate 175 (proton acceptor) is an active-site residue. Substrate-binding positions include glycine 181, serine 220, and glycine 241–glycine 242.

Belongs to the triosephosphate isomerase family. As to quaternary structure, homodimer.

Its subcellular location is the cytoplasm. The enzyme catalyses D-glyceraldehyde 3-phosphate = dihydroxyacetone phosphate. Its pathway is carbohydrate biosynthesis; gluconeogenesis. The protein operates within carbohydrate degradation; glycolysis; D-glyceraldehyde 3-phosphate from glycerone phosphate: step 1/1. Involved in the gluconeogenesis. Catalyzes stereospecifically the conversion of dihydroxyacetone phosphate (DHAP) to D-glyceraldehyde-3-phosphate (G3P). The polypeptide is Triosephosphate isomerase (Shewanella frigidimarina (strain NCIMB 400)).